We begin with the raw amino-acid sequence, 116 residues long: Iron-sulfur cluster insertion protein ErpA (116 aa).

Positions 44, 108, and 110 each coordinate iron-sulfur cluster.

The protein belongs to the HesB/IscA family. Homodimer. Iron-sulfur cluster is required as a cofactor.

Its function is as follows. Required for insertion of 4Fe-4S clusters for at least IspG. The protein is Iron-sulfur cluster insertion protein ErpA of Nitrosococcus oceani (strain ATCC 19707 / BCRC 17464 / JCM 30415 / NCIMB 11848 / C-107).